The sequence spans 309 residues: Probable lipid kinase YegS-like (309 aa).

The region spanning 1–134 (MAPSHWRLIL…IDLLRIDADH (134 aa)) is the DAGKc domain. Residues threonine 39, 65-71 (GDGTLSE), and threonine 96 each bind ATP. Mg(2+) contacts are provided by leucine 219, aspartate 222, and leucine 224. Glutamate 280 functions as the Proton acceptor in the catalytic mechanism.

Belongs to the diacylglycerol/lipid kinase family. YegS lipid kinase subfamily. Mg(2+) is required as a cofactor. Ca(2+) serves as cofactor.

Its subcellular location is the cytoplasm. Probably phosphorylates lipids; the in vivo substrate is unknown. The chain is Probable lipid kinase YegS-like from Xanthomonas campestris pv. campestris (strain 8004).